Reading from the N-terminus, the 911-residue chain is General transcription factor 3C polypeptide 2 (911 aa).

Disordered stretches follow at residues 24–187 (DSPG…RRRA) and 205–297 (ALPA…MAPN). Residues 35-46 (DVKTSSEMTSAE) are compositionally biased toward polar residues. Ser-63 bears the Phosphoserine mark. Residues 64–81 (PDQRRLPPEQESLSRLEQ) are compositionally biased toward basic and acidic residues. The segment covering 92 to 112 (SKPRASKPGRKRGGRTRKGPK) has biased composition (basic residues). The segment covering 114-123 (PQQPNPPSAP) has biased composition (pro residues). A phosphoserine mark is found at Ser-132, Ser-165, Ser-167, Ser-220, and Ser-260. The span at 253–262 (EAEDVEESEG) shows a compositional bias: acidic residues. A compositionally biased stretch (low complexity) spans 263–277 (PSESSSEPEPVVPRS). WD repeat units lie at residues 366–426 (PEDG…MNET), 427–483 (HPLS…AWEL), 484–535 (PGTP…IYKV), 536–603 (QCVA…SLKL), 604–654 (YPFQ…NSIK), and 655–690 (RFLS…HYID). A Phosphoserine modification is found at Ser-597. The disordered stretch occupies residues 765 to 785 (SPEGPDHSSASSGVPNPPKAR). A phosphoserine mark is found at Ser-871, Ser-892, and Ser-893. The disordered stretch occupies residues 889–911 (FQPSSPTRRPGFSPTSHRLLPTP). Thr-895 bears the Phosphothreonine mark. The residue at position 901 (Ser-901) is a Phosphoserine.

As to quaternary structure, part of the TFIIIC subcomplex TFIIIC2, consisting of six subunits, GTF3C1, GTF3C2, GTF3C3, GTF3C4, GTF3C5 and GTF3C6.

It is found in the nucleus. Functionally, required for RNA polymerase III-mediated transcription. Component of TFIIIC that initiates transcription complex assembly on tRNA and is required for transcription of 5S rRNA and other stable nuclear and cytoplasmic RNAs. May play a direct role in stabilizing interactions of TFIIIC2 with TFIIIC1. This chain is General transcription factor 3C polypeptide 2 (GTF3C2), found in Homo sapiens (Human).